A 378-amino-acid polypeptide reads, in one-letter code: MKNSIIELARELIRRPSISPDDQGCQQIIAERLERLGFQIEWLPFNDTLNLWAKHGSGSPVIAFAGHTDVVPVGDTTQWQYPPFSAQLVDNVLYGRGAADMKGSLAAMVVAAEHYVKANPEHSGTVALLITSDEEAAAKDGTVRVVETLMARGEPIDYCIVGEPSSAQQFGDIVKNGRRGSITANLYIQGIQGHVAYPHLAQNPVHKALGFLTELTTYQWDNGNDFFPPTSLQIANIQAGTGSNNVIPGELYVQFNLRYCTEVTDDIIKKKVAEMLAKHQLNYRIEWHLSGKPFLTAKGKLVDTLLDVVEKITQNRPHLDTGGGTSDARFIALMGAEVVEFGPLNKTIHKVDECVNVDDLAKCGEVYQHVLCNMLERV.

A Zn(2+)-binding site is contributed by H67. Residue D69 is part of the active site. D100 contacts Zn(2+). E134 acts as the Proton acceptor in catalysis. The Zn(2+) site is built by E135, E163, and H349.

Belongs to the peptidase M20A family. DapE subfamily. In terms of assembly, homodimer. Zn(2+) serves as cofactor. Co(2+) is required as a cofactor.

The enzyme catalyses N-succinyl-(2S,6S)-2,6-diaminopimelate + H2O = (2S,6S)-2,6-diaminopimelate + succinate. The protein operates within amino-acid biosynthesis; L-lysine biosynthesis via DAP pathway; LL-2,6-diaminopimelate from (S)-tetrahydrodipicolinate (succinylase route): step 3/3. In terms of biological role, catalyzes the hydrolysis of N-succinyl-L,L-diaminopimelic acid (SDAP), forming succinate and LL-2,6-diaminopimelate (DAP), an intermediate involved in the bacterial biosynthesis of lysine and meso-diaminopimelic acid, an essential component of bacterial cell walls. The sequence is that of Succinyl-diaminopimelate desuccinylase from Pasteurella multocida (strain Pm70).